We begin with the raw amino-acid sequence, 425 residues long: Proteinase-activated receptor 1 (425 aa).

Positions M1–S21 are cleaved as a signal peptide. Residues A22–R41 constitute a propeptide, removed for receptor activation. N-linked (GlcNAc...) asparagine glycosylation is found at N35, N62, and N75. Residues S42–T102 lie on the Extracellular side of the membrane. Residues L103–I128 form a helical membrane-spanning segment. The Cytoplasmic portion of the chain corresponds to L129–A137. Residues V138–F157 form a helical membrane-spanning segment. Residues K158–R176 are Extracellular-facing. Residues C175 and C254 are joined by a disulfide bond. The chain crosses the membrane as a helical span at residues F177–I198. The Cytoplasmic segment spans residues D199–R218. Residues A219–L239 traverse the membrane as a helical segment. Residues K240–A268 are Extracellular-facing. N-linked (GlcNAc...) asparagine glycans are attached at residues N250 and N259. A helical transmembrane segment spans residues Y269–V288. Residues C289 to A311 lie on the Cytoplasmic side of the membrane. The helical transmembrane segment at L312–I334 threads the bilayer. At A335–Y350 the chain is on the extracellular side. A helical transmembrane segment spans residues F351–A374. At S375–T425 the chain is on the cytoplasmic side. S418 carries the post-translational modification Phosphoserine.

It belongs to the G-protein coupled receptor 1 family. Post-translationally, proteolytic cleavage by thrombin generates a new N-terminus that functions as a tethered ligand. Also proteolytically cleaved by cathepsin CTSG. Cleavage at 41-Arg-|-Ser-42 by CTSG results in receptor activation while cleavage at 55-Phe-|-Trp-56 results in inhibition of receptor activation. In terms of processing, phosphorylated in the C-terminal tail; probably mediating desensitization prior to the uncoupling and internalization of the receptor.

The protein resides in the cell membrane. In terms of biological role, high affinity receptor that binds the activated thrombin, leading to calcium release from intracellular stores. The thrombin-activated receptor signaling pathway is mediated through PTX-insensitive G proteins, activation of phospholipase C resulting in the production of 1D-myo-inositol 1,4,5-trisphosphate (InsP3) which binds to InsP3 receptors causing calcium release from the stores. In astrocytes, the calcium released into the cytosol allows the Ca(2+)-dependent release of L-glutamate into the synaptic cleft through BEST1, that targets the neuronal postsynaptic GRIN2A/NMDAR receptor resulting in the synaptic plasticity regulation. May play a role in platelets activation and in vascular development. Mediates up-regulation of pro-inflammatory cytokines, such as MCP-1/CCL2 and IL6, triggered by coagulation factor Xa (F10) in cardiac fibroblasts and umbilical vein endothelial cells. In Papio hamadryas (Hamadryas baboon), this protein is Proteinase-activated receptor 1.